A 547-amino-acid polypeptide reads, in one-letter code: Cdc42-interacting protein 4 (547 aa).

Residues 1–117 (MDWGTELWDQ…EMKQERKMHF (117 aa)) form a required for translocation to the plasma membrane in response to insulin, podosome formation and interaction with AKAP9 and microtubules region. Residues 1–264 (MDWGTELWDQ…AAESVDAKND (264 aa)) form the F-BAR domain. The stretch at 67–259 (FSQQQSFVQL…EGMKVAAESV (193 aa)) forms a coiled coil. The segment at 293 to 483 (RVPSDSSLGT…YTEFDEDFEE (191 aa)) is interaction with CDC42. Residues 293–547 (RVPSDSSLGT…PTSYLRVTLN (255 aa)) form an interaction with PDE6G region. The disordered stretch occupies residues 294–323 (VPSDSSLGTPDGRPELRAASSRSRAKRWPF). S296, S298, and S299 each carry phosphoserine. Positions 332–425 (TEDFSHLPPE…ESRVLSNRGD (94 aa)) form a coiled coil. The region spanning 337 to 414 (HLPPEQQRKR…VQKYEAWLAE (78 aa)) is the REM-1 domain. Residues 415–547 (AESRVLSNRG…PTSYLRVTLN (133 aa)) are required for interaction with FASLG and localization to lysosomes. Positions 420-485 (LSNRGDSLSR…EFDEDFEEPA (66 aa)) are disordered. S426 carries the post-translational modification Phosphoserine. The tract at residues 431–487 (TRPPDPPTTAPPDSSSSSNNSGSQDNKESSEEPPSEEGQDTPIYTEFDEDFEEPASP) is interaction with DNM2 and WASL. Low complexity predominate over residues 441 to 451 (PPDSSSSSNNS). An interaction with DNM1 and WASL region spans residues 476 to 547 (EFDEDFEEPA…PTSYLRVTLN (72 aa)). The tract at residues 484–547 (PASPIGQCVA…PTSYLRVTLN (64 aa)) is required for podosome formation. Residues 486-547 (SPIGQCVAIY…PTSYLRVTLN (62 aa)) enclose the SH3 domain. The tract at residues 490–547 (QCVAIYHFEGSSEGTVSMSEGEDLSLMEEDKGDGWTRVRRKQGGEGYVPTSYLRVTLN) is interaction with WAS. The segment at 492–547 (VAIYHFEGSSEGTVSMSEGEDLSLMEEDKGDGWTRVRRKQGGEGYVPTSYLRVTLN) is interaction with ARHGAP17, DAAM1, DIAPH1 and DIAPH2.

It belongs to the FNBP1 family. As to quaternary structure, homodimerizes, the dimers can polymerize end-to-end to form filamentous structures. Interacts specifically with GTP-bound CDC42 and RHOQ. Interacts with AKAP9, ARHGAP17, DAAM1, DIAPH1, DIAPH2, DNM1, DNM2, FASLG/FASL, GAPVD1, LYN, microtubules, SRC, WAS/WASP and WASL/N-WASP. Interacts with the ligand binding domain of the thyroid receptor (TR) in the presence of thyroid hormone. May interact with CTNNB1 and HD/HTT. Interacts with PDE6G. In terms of tissue distribution, expressed in adrenal gland, aorta, brain, heart, kidney, liver, skeletal muscle and spleen.

The protein resides in the cytoplasm. Its subcellular location is the cytoskeleton. It is found in the cell cortex. It localises to the lysosome. The protein localises to the golgi apparatus. The protein resides in the cell membrane. Its subcellular location is the cell projection. It is found in the phagocytic cup. Functionally, required to coordinate membrane tubulation with reorganization of the actin cytoskeleton during endocytosis. Also acts as a link between CDC42 signaling and regulation of the actin cytoskeleton. Binds to lipids such as phosphatidylinositol 4,5-bisphosphate and phosphatidylserine and promotes membrane invagination and the formation of tubules. Also enhances actin polymerization in the vicinity of membrane tubules by recruiting WASL/N-WASP which in turn activates the Arp2/3 complex. Actin polymerization and dynamin may promote the fission of membrane tubules to form endocytic vesicles. Required for the formation of podosomes, actin-rich adhesion structures specific to monocyte-derived cells. Required for translocation of GLUT4 to the plasma membrane in response to insulin signaling. May be required for the lysosomal retention of FASLG/FASL. The protein is Cdc42-interacting protein 4 (Trip10) of Rattus norvegicus (Rat).